We begin with the raw amino-acid sequence, 126 residues long: Late histone H2A.L3 (126 aa).

Residues 1–20 (MSGRGKGAGKARAKAKSRSA) are disordered. Residue serine 2 is modified to N-acetylserine. Position 2 is a phosphoserine (serine 2). Residues 7–19 (GAGKARAKAKSRS) show a composition bias toward basic residues. Position 105 is an N5-methylglutamine (glutamine 105). Residue lysine 120 forms a Glycyl lysine isopeptide (Lys-Gly) (interchain with G-Cter in ubiquitin) linkage.

The protein belongs to the histone H2A family. In terms of assembly, the nucleosome is a histone octamer containing two molecules each of H2A, H2B, H3 and H4 assembled in one H3-H4 heterotetramer and two H2A-H2B heterodimers. The octamer wraps approximately 147 bp of DNA. Monoubiquitination of Lys-120 gives a specific tag for epigenetic transcriptional repression. In terms of processing, phosphorylation of Ser-2 directly represses transcription.

It is found in the nucleus. Its subcellular location is the chromosome. Functionally, core component of nucleosome. Nucleosomes wrap and compact DNA into chromatin, limiting DNA accessibility to the cellular machineries which require DNA as a template. Histones thereby play a central role in transcription regulation, DNA repair, DNA replication and chromosomal stability. DNA accessibility is regulated via a complex set of post-translational modifications of histones, also called histone code, and nucleosome remodeling. The protein is Late histone H2A.L3 of Strongylocentrotus purpuratus (Purple sea urchin).